The primary structure comprises 585 residues: Arginine--tRNA ligase (585 aa).

The 'HIGH' region motif lies at 130-140; sequence ANPTGPMHVGH.

It belongs to the class-I aminoacyl-tRNA synthetase family. In terms of assembly, monomer.

It is found in the cytoplasm. It catalyses the reaction tRNA(Arg) + L-arginine + ATP = L-arginyl-tRNA(Arg) + AMP + diphosphate. The chain is Arginine--tRNA ligase from Methylorubrum extorquens (strain CM4 / NCIMB 13688) (Methylobacterium extorquens).